A 638-amino-acid chain; its full sequence is 1,4-alpha-glucan branching enzyme GlgB (638 aa).

Catalysis depends on Asp-303, which acts as the Nucleophile. Catalysis depends on Glu-356, which acts as the Proton donor.

Belongs to the glycosyl hydrolase 13 family. GlgB subfamily. As to quaternary structure, monomer.

It catalyses the reaction Transfers a segment of a (1-&gt;4)-alpha-D-glucan chain to a primary hydroxy group in a similar glucan chain.. The protein operates within glycan biosynthesis; glycogen biosynthesis. In terms of biological role, catalyzes the formation of the alpha-1,6-glucosidic linkages in glycogen by scission of a 1,4-alpha-linked oligosaccharide from growing alpha-1,4-glucan chains and the subsequent attachment of the oligosaccharide to the alpha-1,6 position. This is 1,4-alpha-glucan branching enzyme GlgB from Lactobacillus acidophilus (strain ATCC 700396 / NCK56 / N2 / NCFM).